A 499-amino-acid chain; its full sequence is MSQLAHNLTLSIFDPVANYRAARIICTIGPSTQSVEALKGLIQSGMSVARMNFSHGSHEYHQTTINNVRQAAAELGVNIAIALDTKGPEIRTGQFVGGDAVMERGATCYVTTDPAFADKGTKDKFYIDYQNLSKVVRPGNYIYIDDGILILQVQSHEDEQTLECTVTNSHTISDRRGVNLPGCDVDLPAVSAKDRVDLQFGVEQGVDMIFASFIRSAEQVGDVRKALGPKGRDIMIICKIENHQGVQNIDSIIEESDGIMVARGDLGVEIPAEKVVVAQKILISKCNVAGKPVICATQMLESMTYNPRPTRAEVSDVANAVFNGADCVMLSGETAKGKYPNEVVQYMARICLEAQSALNEYVFFNSIKKLQHIPMSADEAVCSSAVNSVYETKAKAMVVLSNTGRSARLVAKYRPNCPIVCVTTRLQTCRQLNITQGVESVFFDADKLGHDEGKEHRVAAGVEFAKSKGYVQTGDYCVVIHADHKVKGYANQTRILLVE.

Position 50 (R50) interacts with substrate. K(+)-binding residues include N52, S54, D84, and T85. 52–55 contributes to the ATP binding site; it reads NFSH. R91 is a binding site for ATP. E241 contacts Mg(2+). The substrate site is built by G264, D265, and T297. D265 is a Mg(2+) binding site.

Belongs to the pyruvate kinase family. In terms of assembly, homotetramer. It depends on Mg(2+) as a cofactor. K(+) serves as cofactor.

It carries out the reaction pyruvate + ATP = phosphoenolpyruvate + ADP + H(+). The protein operates within carbohydrate degradation; glycolysis; pyruvate from D-glyceraldehyde 3-phosphate: step 5/5. Its activity is regulated as follows. Activated by fructose 2,6-bisphosphate, activated by the effector in a non cooperative manner. The protein is Pyruvate kinase (PYK) of Leishmania mexicana.